A 139-amino-acid polypeptide reads, in one-letter code: Putative nickel-responsive regulator (139 aa).

Positions 79, 90, 92, and 98 each coordinate Ni(2+).

The protein belongs to the transcriptional regulatory CopG/NikR family. Requires Ni(2+) as cofactor.

Its function is as follows. Transcriptional regulator. This Pelobacter propionicus (strain DSM 2379 / NBRC 103807 / OttBd1) protein is Putative nickel-responsive regulator.